The sequence spans 444 residues: tRNA-2-methylthio-N(6)-dimethylallyladenosine synthase (444 aa).

The region spanning 7–121 (KTFHVKSFGC…LPELIARAER (115 aa)) is the MTTase N-terminal domain. Residues C16, C52, C84, C158, C162, and C165 each contribute to the [4Fe-4S] cluster site. Positions 144–376 (GNQRPTAFLT…QALLNEQQQA (233 aa)) constitute a Radical SAM core domain. Residues 379–441 (EATVGRTTRL…PNSLGAEPLM (63 aa)) enclose the TRAM domain.

Belongs to the methylthiotransferase family. MiaB subfamily. Monomer. [4Fe-4S] cluster serves as cofactor.

Its subcellular location is the cytoplasm. The catalysed reaction is N(6)-dimethylallyladenosine(37) in tRNA + (sulfur carrier)-SH + AH2 + 2 S-adenosyl-L-methionine = 2-methylsulfanyl-N(6)-dimethylallyladenosine(37) in tRNA + (sulfur carrier)-H + 5'-deoxyadenosine + L-methionine + A + S-adenosyl-L-homocysteine + 2 H(+). Catalyzes the methylthiolation of N6-(dimethylallyl)adenosine (i(6)A), leading to the formation of 2-methylthio-N6-(dimethylallyl)adenosine (ms(2)i(6)A) at position 37 in tRNAs that read codons beginning with uridine. In Sphingopyxis alaskensis (strain DSM 13593 / LMG 18877 / RB2256) (Sphingomonas alaskensis), this protein is tRNA-2-methylthio-N(6)-dimethylallyladenosine synthase.